The primary structure comprises 459 residues: Argininosuccinate lyase (459 aa).

It belongs to the lyase 1 family. Argininosuccinate lyase subfamily.

The protein localises to the cytoplasm. The catalysed reaction is 2-(N(omega)-L-arginino)succinate = fumarate + L-arginine. The protein operates within amino-acid biosynthesis; L-arginine biosynthesis; L-arginine from L-ornithine and carbamoyl phosphate: step 3/3. This Staphylococcus aureus (strain MSSA476) protein is Argininosuccinate lyase.